Here is a 652-residue protein sequence, read N- to C-terminus: DNA ligase (652 aa).

NAD(+) contacts are provided by residues 29–33, 78–79, and E107; these read DSEYD and SL. The active-site N6-AMP-lysine intermediate is the K109. NAD(+)-binding residues include R130, E164, K278, and K302. Zn(2+)-binding residues include C395, C398, C413, and C418. In terms of domain architecture, BRCT spans 577 to 652; the sequence is AADAALSGMT…IRDEDWLDSL (76 aa).

It belongs to the NAD-dependent DNA ligase family. LigA subfamily. Requires Mg(2+) as cofactor. The cofactor is Mn(2+).

The enzyme catalyses NAD(+) + (deoxyribonucleotide)n-3'-hydroxyl + 5'-phospho-(deoxyribonucleotide)m = (deoxyribonucleotide)n+m + AMP + beta-nicotinamide D-nucleotide.. Its function is as follows. DNA ligase that catalyzes the formation of phosphodiester linkages between 5'-phosphoryl and 3'-hydroxyl groups in double-stranded DNA using NAD as a coenzyme and as the energy source for the reaction. It is essential for DNA replication and repair of damaged DNA. The protein is DNA ligase of Streptococcus sanguinis (strain SK36).